Reading from the N-terminus, the 280-residue chain is Pantothenate synthetase (280 aa).

30–37 contributes to the ATP binding site; that stretch reads MGYLHEGH. Catalysis depends on His37, which acts as the Proton donor. Gln61 lines the (R)-pantoate pocket. Gln61 lines the beta-alanine pocket. 147-150 serves as a coordination point for ATP; sequence GQKD. Gln153 lines the (R)-pantoate pocket. Residues Val176 and 184-187 each bind ATP; that span reads MSSR.

This sequence belongs to the pantothenate synthetase family. As to quaternary structure, homodimer.

The protein localises to the cytoplasm. The enzyme catalyses (R)-pantoate + beta-alanine + ATP = (R)-pantothenate + AMP + diphosphate + H(+). It participates in cofactor biosynthesis; (R)-pantothenate biosynthesis; (R)-pantothenate from (R)-pantoate and beta-alanine: step 1/1. Functionally, catalyzes the condensation of pantoate with beta-alanine in an ATP-dependent reaction via a pantoyl-adenylate intermediate. This Thermosipho melanesiensis (strain DSM 12029 / CIP 104789 / BI429) protein is Pantothenate synthetase.